The following is a 152-amino-acid chain: Phospholipase A2 (152 aa).

A signal peptide spans 1–20 (MAACHRILLLLSVAVASGAA). Intrachain disulfides connect C39–C96, C53–C142, C55–C70, C69–C124, C75–C149, C76–C117, C85–C110, and C103–C115. G56 and G58 together coordinate Ca(2+). H73 is a catalytic residue. D74 provides a ligand contact to Ca(2+). Residue D118 is part of the active site.

The protein belongs to the phospholipase A2 family. In terms of tissue distribution, expressed by the venom gland. Heavily expressed in the venom gland transcriptome.

The protein resides in the secreted. The catalysed reaction is a 1,2-diacyl-sn-glycero-3-phosphocholine + H2O = a 1-acyl-sn-glycero-3-phosphocholine + a fatty acid + H(+). PA2 catalyzes the calcium-dependent hydrolysis of the 2-acyl groups in 3-sn-phosphoglycerides. The protein is Phospholipase A2 of Meiacanthus atrodorsalis (Forktail blenny).